The chain runs to 461 residues: uncharacterized protein (461 aa).

A disordered region spans residues 86-127 (KMKPNKDDDEEEDEDDEDDEDDEEEDNEEEDNEEENEITIAP). A compositionally biased stretch (acidic residues) spans 92–122 (DDDEEEDEDDEDDEDDEEEDNEEEDNEEENE). Coiled-coil stretches lie at residues 95-123 (EEED…ENEI) and 405-459 (NKYI…KLKK).

This sequence belongs to the mimivirus L5 family.

This is an uncharacterized protein from Acanthamoeba polyphaga mimivirus (APMV).